The primary structure comprises 268 residues: Transcription initiation factor TFIID subunit 14b (268 aa).

Residues 1–20 (MTNSSSSKKQAQDQPETSEP) are compositionally biased toward polar residues. The tract at residues 1–36 (MTNSSSSKKQAQDQPETSEPTLKSLKTKMTKSDEKQ) is disordered. In terms of domain architecture, YEATS spans 38–182 (KLKDIEISVP…ESFLARVQNH (145 aa)). Positions 229-263 (DELLQLAAARQQVQAHIAKLRRQISLLEGQNQTVK) form a coiled coil.

Belongs to the YAF9 family. Component of the TFIID complex. TFIID is composed of TATA binding protein (TBP) and a number of TBP-associated factors (TAFs) whose MWs range from 14-217 kDa. Interacts with TAF1, TAF4B and TAF12B. Component of the SWR1 chromatin-remodeling complex. Interacts with FLX, a component of the transcription activator complex FRI-C. Interacts with SWC4, and with EAF1A and EAF1B (via HSA domain). Expressed in roots, leaves, inflorescence and flowering tissues.

The protein resides in the cytoplasm. It localises to the nucleus. Its function is as follows. Negative regulator of flowering controlling the H4K5 acetylation levels in the FLC and FT chromatin. Positively regulates FLC expression. Component of the transcription factor IID (TFIID) complex that is essential for mediating regulation of RNA polymerase transcription. Component of the SWR1 complex which mediates the ATP-dependent exchange of histone H2A for the H2A variant HZT1 leading to transcriptional regulation of selected genes by chromatin remodeling. Component of a NuA4 histone acetyltransferase complex which is involved in transcriptional activation of selected genes principally by acetylation of nucleosomal histones H4 and H2A. This Arabidopsis thaliana (Mouse-ear cress) protein is Transcription initiation factor TFIID subunit 14b.